The chain runs to 516 residues: 2,3-bisphosphoglycerate-independent phosphoglycerate mutase (516 aa).

2 residues coordinate Mn(2+): Asp15 and Ser65. Ser65 (phosphoserine intermediate) is an active-site residue. Substrate is bound by residues His126, 156–157, Arg188, Arg194, 263–266, and Lys336; these read RD and RADR. Residues Asp403, His407, Asp444, His445, and His463 each coordinate Mn(2+).

It belongs to the BPG-independent phosphoglycerate mutase family. Monomer. It depends on Mn(2+) as a cofactor.

It catalyses the reaction (2R)-2-phosphoglycerate = (2R)-3-phosphoglycerate. The protein operates within carbohydrate degradation; glycolysis; pyruvate from D-glyceraldehyde 3-phosphate: step 3/5. Catalyzes the interconversion of 2-phosphoglycerate and 3-phosphoglycerate. The chain is 2,3-bisphosphoglycerate-independent phosphoglycerate mutase from Francisella tularensis subsp. holarctica (strain OSU18).